Reading from the N-terminus, the 127-residue chain is Small ribosomal subunit protein bS6 (127 aa).

It belongs to the bacterial ribosomal protein bS6 family.

In terms of biological role, binds together with bS18 to 16S ribosomal RNA. This Acinetobacter baumannii (strain AB0057) protein is Small ribosomal subunit protein bS6.